We begin with the raw amino-acid sequence, 379 residues long: Cobalt-precorrin-5B C(1)-methyltransferase (379 aa).

The protein belongs to the CbiD family.

The enzyme catalyses Co-precorrin-5B + S-adenosyl-L-methionine = Co-precorrin-6A + S-adenosyl-L-homocysteine. It functions in the pathway cofactor biosynthesis; adenosylcobalamin biosynthesis; cob(II)yrinate a,c-diamide from sirohydrochlorin (anaerobic route): step 6/10. Catalyzes the methylation of C-1 in cobalt-precorrin-5B to form cobalt-precorrin-6A. This chain is Cobalt-precorrin-5B C(1)-methyltransferase, found in Salmonella typhimurium (strain LT2 / SGSC1412 / ATCC 700720).